A 198-amino-acid chain; its full sequence is Ribonuclease HII (198 aa).

Residues glutamine 10 to serine 198 enclose the RNase H type-2 domain. Residues aspartate 16, glutamate 17, and aspartate 108 each contribute to the a divalent metal cation site.

It belongs to the RNase HII family. Mn(2+) is required as a cofactor. The cofactor is Mg(2+).

The protein localises to the cytoplasm. It carries out the reaction Endonucleolytic cleavage to 5'-phosphomonoester.. In terms of biological role, endonuclease that specifically degrades the RNA of RNA-DNA hybrids. This Escherichia coli O81 (strain ED1a) protein is Ribonuclease HII.